The chain runs to 258 residues: UPF0246 protein HS_0482 (258 aa).

It belongs to the UPF0246 family.

The protein is UPF0246 protein HS_0482 of Histophilus somni (strain 129Pt) (Haemophilus somnus).